We begin with the raw amino-acid sequence, 551 residues long: Cytochrome c oxidase subunit 1 homolog (551 aa).

3 helical membrane passes run 14 to 34 (GELG…VVAA), 40 to 60 (EYAF…FVIG), and 88 to 108 (VGTL…VIIA). Histidine 132 provides a ligand contact to heme b. Helical transmembrane passes span 133 to 153 (TSAV…FYVV), 169 to 189 (FVVL…LLGI), 202 to 222 (ADLW…GTVL), 229 to 249 (IYVA…LHLG), 280 to 300 (GHNA…YYFI), 313 to 333 (LSIV…PHHL), 345 to 365 (LGMT…INGL), and 383 to 403 (MMVV…MMSV). 3 residues coordinate Cu cation: histidine 281, histidine 331, and histidine 332. Positions 419 and 421 each coordinate heme b. The next 3 membrane-spanning stretches (helical) occupy residues 424-444 (ALGW…PWLW), 459-479 (FWVS…AGIL), and 513-533 (IGGI…FMTI).

It belongs to the heme-copper respiratory oxidase family. Requires Cu(2+) as cofactor. Heme b serves as cofactor.

It localises to the cell membrane. It carries out the reaction 4 Fe(II)-[cytochrome c] + O2 + 8 H(+)(in) = 4 Fe(III)-[cytochrome c] + 2 H2O + 4 H(+)(out). The protein operates within energy metabolism; oxidative phosphorylation. Functionally, cytochrome c oxidase is the component of the respiratory chain that catalyzes the reduction of oxygen to water. Subunits 1-3 form the functional core of the enzyme complex. Co I is the catalytic subunit of the enzyme. Electrons originating in cytochrome c or a quinol are transferred to the bimetallic center formed by a high-spin heme and copper B. The sequence is that of Cytochrome c oxidase subunit 1 homolog (fixN) from Azorhizobium caulinodans (strain ATCC 43989 / DSM 5975 / JCM 20966 / LMG 6465 / NBRC 14845 / NCIMB 13405 / ORS 571).